The following is a 335-amino-acid chain: UPF0353 protein MAP_1207 (335 aa).

The next 2 membrane-spanning stretches (helical) occupy residues 18–38 and 67–87; these read WFFL…LMQL and LPAI…AGPT. The region spanning 98-294 is the VWFA domain; the sequence is VVMLVIDVSQ…QELKSVYATL (197 aa). A helical transmembrane segment spans residues 309–329; that stretch reads VGWVRLGALVLALAALTALLI.

It belongs to the UPF0353 family.

It is found in the cell membrane. This chain is UPF0353 protein MAP_1207, found in Mycolicibacterium paratuberculosis (strain ATCC BAA-968 / K-10) (Mycobacterium paratuberculosis).